The primary structure comprises 437 residues: Transcription factor AP-2-alpha (437 aa).

Residue Lys10 forms a Glycyl lysine isopeptide (Lys-Gly) (interchain with G-Cter in SUMO); alternate linkage. Lys10 participates in a covalent cross-link: Glycyl lysine isopeptide (Lys-Gly) (interchain with G-Cter in SUMO2); alternate. Residues 14-107 (CEDRHDGASN…GQRQSQESGL (94 aa)) are disordered. A PPxY motif motif is present at residues 57 to 62 (YFPPPY). 2 stretches are compositionally biased toward low complexity: residues 65–74 (IYPQSQDPYS) and 88–101 (QPQPQHPGWPGQRQ). Residues Lys177 and Lys184 each participate in a glycyl lysine isopeptide (Lys-Gly) (interchain with G-Cter in SUMO2) cross-link. Phosphoserine; by PKA is present on Ser239. Positions 280 to 410 (RRKAANVTLL…YLTEALKAMD (131 aa)) are H-S-H (helix-span-helix), dimerization. Polar residues predominate over residues 414-427 (LSNNPNSHTDNNAK). The interval 414–437 (LSNNPNSHTDNNAKSSDKEEKHRK) is disordered. Basic and acidic residues predominate over residues 428–437 (SSDKEEKHRK).

Belongs to the AP-2 family. In terms of assembly, binds DNA as a dimer. Can form homodimers or heterodimers with other AP-2 family members. Interacts with WWOX. Interacts with CITED4. Interacts with UBE2I. Interacts with RALBP1 in a complex also containing EPN1 and NUMB during interphase and mitosis. Interacts with KCTD1; this interaction represses transcription activation. Interacts (via C-terminus) with CITED2 (via C-terminus); the interaction stimulates TFAP2A-transcriptional activation. Interacts (via N-terminus) with EP300 (via N-terminus); the interaction requires CITED2. Interacts with KCTD15; this interaction inhibits TFAP2A transcriptional activation. In terms of processing, sumoylated on Lys-10; which inhibits transcriptional activity.

The protein resides in the nucleus. In terms of biological role, sequence-specific DNA-binding protein that interacts with inducible viral and cellular enhancer elements to regulate transcription of selected genes. AP-2 factors bind to the consensus sequence 5'-GCCNNNGGC-3' and activate genes involved in a large spectrum of important biological functions including proper eye, face, body wall, limb and neural tube development. They also suppress a number of genes including MCAM/MUC18, C/EBP alpha and MYC. AP-2-alpha is the only AP-2 protein required for early morphogenesis of the lens vesicle. Together with the CITED2 coactivator, stimulates the PITX2 P1 promoter transcription activation. Associates with chromatin to the PITX2 P1 promoter region. The chain is Transcription factor AP-2-alpha (TFAP2A) from Bos taurus (Bovine).